We begin with the raw amino-acid sequence, 266 residues long: Transmembrane domain-containing protein TMIGD3 (266 aa).

The segment at 1-20 is disordered; the sequence is MEGSPAGPIEQKEARWESSW. The chain crosses the membrane as a helical span at residues 55-75; the sequence is FLPVMWLFILLSLALISDAMV. Asn192 carries an N-linked (GlcNAc...) asparagine glycan. Residues 213–233 form a helical membrane-spanning segment; that stretch reads ILIICILITGLGIISVISHLT.

In terms of tissue distribution, expressed in the lung and bone. Expressed at lower levels in osteosarcoma tissues (at protein level).

The protein localises to the membrane. In terms of biological role, plays a suppressive role in osteosarcoma malignancy by inhibiting NF-kappa-B activity. This is Transmembrane domain-containing protein TMIGD3 from Homo sapiens (Human).